Reading from the N-terminus, the 85-residue chain is Toxin Cll7 (85 aa).

Residues 1–19 form the signal peptide; that stretch reads MNSLLMITACLVLFGTVWA. The LCN-type CS-alpha/beta domain maps to 20–83; that stretch reads KEGYLVNTYT…TWPLPNKTCG (64 aa). 4 disulfides stabilise this stretch: Cys-31-Cys-82, Cys-35-Cys-58, Cys-44-Cys-63, and Cys-48-Cys-65.

This sequence belongs to the long (4 C-C) scorpion toxin superfamily. Sodium channel inhibitor family. Beta subfamily. As to expression, expressed by the venom gland.

It is found in the secreted. In terms of biological role, beta toxins bind voltage-independently at site-4 of sodium channels (Nav) and shift the voltage of activation toward more negative potentials thereby affecting sodium channel activation and promoting spontaneous and repetitive firing. This Centruroides limpidus (Mexican scorpion) protein is Toxin Cll7.